The sequence spans 261 residues: LIM and SH3 domain protein 1 (261 aa).

An N-acetylmethionine modification is found at M1. One can recognise an LIM zinc-binding domain in the interval 5 to 56 (CARCGKIVYPTEKVNCLDKFWHKACFHCETCKMTLNMKNYKGYEKKPYCNAH). The residue at position 42 (K42) is an N6-acetyllysine. Nebulin repeat units lie at residues 61-95 (SFTMVADTPENLRLKQQSELQSQVRYKEEFEKNKG) and 97-131 (GFSVVADTPELQRIKKTQDQISNIKYHEEFEKSRM). Phosphothreonine is present on T68. At K75 the chain carries N6-methyllysine. S99 carries the phosphoserine modification. T104 is subject to Phosphothreonine. Positions 111–186 (KKTQDQISNI…QPVAQSYGGY (76 aa)) are disordered. At K112 the chain carries N6-succinyllysine. S118 carries the post-translational modification Phosphoserine. A compositionally biased stretch (basic and acidic residues) spans 121–130 (KYHEEFEKSR). 2 positions are modified to phosphoserine: S134 and S146. Over residues 167–183 (SAPVYQQPQQQPVAQSY) the composition is skewed to low complexity. The region spanning 202 to 261 (GGGKRYRAVYDYSAADEDEVSFQDGDTIVNVQQIDDGWMYGTVERTGDTGMLPANYVEAI) is the SH3 domain.

In terms of assembly, interacts with F-actin. Interacts with ANKRD54. Interacts with KBTBD10.

The protein resides in the cytoplasm. It localises to the cell cortex. Its subcellular location is the cytoskeleton. Plays an important role in the regulation of dynamic actin-based, cytoskeletal activities. Agonist-dependent changes in LASP1 phosphorylation may also serve to regulate actin-associated ion transport activities, not only in the parietal cell but also in certain other F-actin-rich secretory epithelial cell types. In Homo sapiens (Human), this protein is LIM and SH3 domain protein 1 (LASP1).